The chain runs to 242 residues: Lysosomal membrane ascorbate-dependent ferrireductase CYB561A3 (242 aa).

Residues 1–7 (MVSGRFY) are Cytoplasmic-facing. Residues 8 to 28 (LSCLLLGSLGSMCILFTIYWM) traverse the membrane as a helical segment. The region spanning 12–219 (LLGSLGSMCI…FGLLVLYILL (208 aa)) is the Cytochrome b561 domain. At 29–45 (QYWRGGFAWNGSIYMFN) the chain is on the lumenal side. Asparagine 38 is a glycosylation site (N-linked (GlcNAc...) asparagine). The helical transmembrane segment at 46-66 (WHPVLMVAGMVVFYGGASLVY) threads the bilayer. The heme b site is built by histidine 47 and arginine 67. The Cytoplasmic segment spans residues 67–83 (RLPQSWVGPKLPWKLLH). L-ascorbate-binding residues include lysine 76 and lysine 80. Histidine 83 provides a ligand contact to heme b. Residues 84-104 (AALHLMAFVLTVVGLVAVFTF) form a helical membrane-spanning segment. Topologically, residues 105 to 119 (HNHGRTANLYSLHSW) are lumenal. Heme b-binding positions include 112–115 (NLYS) and histidine 117. Residues 120 to 140 (LGITTVFLFACQWFLGFAVFL) traverse the membrane as a helical segment. Topologically, residues 141–154 (LPWASMWLRSLLKP) are cytoplasmic. Residue arginine 149 coordinates L-ascorbate. Residues 155 to 175 (IHVFFGAAILSLSIASVISGI) form a helical membrane-spanning segment. Heme b-binding residues include histidine 156 and glutamate 177. The Lumenal segment spans residues 176-202 (NEKLFFSLKNTTRPYHSLPSEAVFANS). Residues 203–223 (TGMLVVAFGLLVLYILLASSW) traverse the membrane as a helical segment. Lysine 224 is a heme b binding site. Residues 224–242 (KRPEPGILTDRQPLLHDGE) are Cytoplasmic-facing.

Homodimer. The cofactor is heme b. In terms of processing, N-glycosylated.

The protein localises to the late endosome membrane. Its subcellular location is the lysosome membrane. The catalysed reaction is Fe(3+)(out) + L-ascorbate(in) = monodehydro-L-ascorbate radical(in) + Fe(2+)(out) + H(+). Its function is as follows. Transmembrane reductase that uses ascorbate as an electron donor in the cytoplasm and transfers electrons across membranes to reduce iron cations Fe(3+) into Fe(2+) in the lumen of the late endosome and lysosome. Reduced iron can then be extruded from the late endosome and lysosome to the cytoplasm by divalent metal-specific transporters. It is therefore most probably involved in endosomal and lysosomal cellular iron homeostasis. This chain is Lysosomal membrane ascorbate-dependent ferrireductase CYB561A3, found in Homo sapiens (Human).